We begin with the raw amino-acid sequence, 137 residues long: Ciliary microtubule inner protein 1 (137 aa).

Expressed in airway epithelial cells, renal tubular cells, pancreatic acinar cells and epithelial cells of the stomach, duodenum, and gallbladder (at protein level).

The protein resides in the cell projection. The protein localises to the cilium. This Homo sapiens (Human) protein is Ciliary microtubule inner protein 1.